Consider the following 240-residue polypeptide: Methylthioribulose-1-phosphate dehydratase (240 aa).

A substrate-binding site is contributed by C100. Residues H117 and H119 each coordinate Zn(2+). The Proton donor/acceptor role is filled by E146. H202 serves as a coordination point for Zn(2+).

This sequence belongs to the aldolase class II family. MtnB subfamily. Requires Zn(2+) as cofactor.

Its subcellular location is the cytoplasm. It catalyses the reaction 5-(methylsulfanyl)-D-ribulose 1-phosphate = 5-methylsulfanyl-2,3-dioxopentyl phosphate + H2O. It participates in amino-acid biosynthesis; L-methionine biosynthesis via salvage pathway; L-methionine from S-methyl-5-thio-alpha-D-ribose 1-phosphate: step 2/6. Its function is as follows. Catalyzes the dehydration of methylthioribulose-1-phosphate (MTRu-1-P) into 2,3-diketo-5-methylthiopentyl-1-phosphate (DK-MTP-1-P). The sequence is that of Methylthioribulose-1-phosphate dehydratase from Emericella nidulans (strain FGSC A4 / ATCC 38163 / CBS 112.46 / NRRL 194 / M139) (Aspergillus nidulans).